We begin with the raw amino-acid sequence, 158 residues long: uncharacterized protein (158 aa).

A signal peptide spans 1–16 (MFRPILILTILSCVLA). Asn-122 carries N-linked (GlcNAc...) asparagine glycosylation.

This is an uncharacterized protein from Caenorhabditis elegans.